A 640-amino-acid polypeptide reads, in one-letter code: Threonine--tRNA ligase (640 aa).

The 63-residue stretch at 1-63 (MSSVTVTLPD…SEDCEIEIVT (63 aa)) folds into the TGS domain. The interval 242–533 (DHRKLGREMD…LIEHYNGRFP (292 aa)) is catalytic. Cysteine 334, histidine 385, and histidine 510 together coordinate Zn(2+).

This sequence belongs to the class-II aminoacyl-tRNA synthetase family. In terms of assembly, homodimer. Zn(2+) serves as cofactor.

The protein resides in the cytoplasm. The catalysed reaction is tRNA(Thr) + L-threonine + ATP = L-threonyl-tRNA(Thr) + AMP + diphosphate + H(+). Its function is as follows. Catalyzes the attachment of threonine to tRNA(Thr) in a two-step reaction: L-threonine is first activated by ATP to form Thr-AMP and then transferred to the acceptor end of tRNA(Thr). The chain is Threonine--tRNA ligase from Halobacterium salinarum (strain ATCC 29341 / DSM 671 / R1).